The primary structure comprises 161 residues: HMG1/2-like protein (161 aa).

Disordered stretches follow at residues 1–46 (MKGA…KRAP), 60–91 (FKQK…EKAP), and 113–161 (GESA…DDDE). Composition is skewed to basic and acidic residues over residues 10-27 (AKAD…EKPA) and 77-89 (AGER…ESEK). The segment at residues 42-111 (PKRAPSAFFV…EYNKAIAAYN (70 aa)) is a DNA-binding region (HMG box). Over residues 114–123 (ESAAAAAPKK) the composition is skewed to low complexity. Acidic residues predominate over residues 145 to 161 (NDDDDDEGSDEDEDDDE).

Belongs to the HMGB family.

The protein resides in the nucleus. The chain is HMG1/2-like protein from Triticum aestivum (Wheat).